The following is a 213-amino-acid chain: Orotate phosphoribosyltransferase (213 aa).

A 5-phospho-alpha-D-ribose 1-diphosphate-binding site is contributed by K26. 34 to 35 (FF) is an orotate binding site. 5-phospho-alpha-D-ribose 1-diphosphate-binding positions include 72 to 73 (YK), R99, K100, K103, H105, and 124 to 132 (DDVITAGTA). Residues T128 and R156 each coordinate orotate.

Belongs to the purine/pyrimidine phosphoribosyltransferase family. PyrE subfamily. As to quaternary structure, homodimer. Mg(2+) is required as a cofactor.

The catalysed reaction is orotidine 5'-phosphate + diphosphate = orotate + 5-phospho-alpha-D-ribose 1-diphosphate. It participates in pyrimidine metabolism; UMP biosynthesis via de novo pathway; UMP from orotate: step 1/2. Its function is as follows. Catalyzes the transfer of a ribosyl phosphate group from 5-phosphoribose 1-diphosphate to orotate, leading to the formation of orotidine monophosphate (OMP). The chain is Orotate phosphoribosyltransferase from Edwardsiella ictaluri (strain 93-146).